A 196-amino-acid polypeptide reads, in one-letter code: GTP cyclohydrolase 1 (196 aa).

Residues C84, H87, and C157 each contribute to the Zn(2+) site.

It belongs to the GTP cyclohydrolase I family. In terms of assembly, toroid-shaped homodecamer, composed of two pentamers of five dimers.

It carries out the reaction GTP + H2O = 7,8-dihydroneopterin 3'-triphosphate + formate + H(+). Its pathway is cofactor biosynthesis; 7,8-dihydroneopterin triphosphate biosynthesis; 7,8-dihydroneopterin triphosphate from GTP: step 1/1. The polypeptide is GTP cyclohydrolase 1 (Corynebacterium glutamicum (strain ATCC 13032 / DSM 20300 / JCM 1318 / BCRC 11384 / CCUG 27702 / LMG 3730 / NBRC 12168 / NCIMB 10025 / NRRL B-2784 / 534)).